The chain runs to 181 residues: Peptide methionine sulfoxide reductase MsrA (181 aa).

Residue Cys14 is part of the active site.

The protein belongs to the MsrA Met sulfoxide reductase family.

The enzyme catalyses L-methionyl-[protein] + [thioredoxin]-disulfide + H2O = L-methionyl-(S)-S-oxide-[protein] + [thioredoxin]-dithiol. The catalysed reaction is [thioredoxin]-disulfide + L-methionine + H2O = L-methionine (S)-S-oxide + [thioredoxin]-dithiol. Its function is as follows. Has an important function as a repair enzyme for proteins that have been inactivated by oxidation. Catalyzes the reversible oxidation-reduction of methionine sulfoxide in proteins to methionine. In Bacillus licheniformis (strain ATCC 14580 / DSM 13 / JCM 2505 / CCUG 7422 / NBRC 12200 / NCIMB 9375 / NCTC 10341 / NRRL NRS-1264 / Gibson 46), this protein is Peptide methionine sulfoxide reductase MsrA.